Here is a 633-residue protein sequence, read N- to C-terminus: Protein CASP (633 aa).

The Cytoplasmic portion of the chain corresponds to 1–601 (MAVASEALLQ…LLFSRATRGL (601 aa)). The tract at residues 39 to 60 (QKTSLDERKELSSKTKEFRKQP) is disordered. 2 coiled-coil regions span residues 111 to 339 (IEAA…LANK) and 369 to 433 (SLES…VDVE). Residues 602-622 (FFMYLILLHLFIMIVLLKLGI) form a helical; Anchor for type IV membrane protein membrane-spanning segment. The Lumenal segment spans residues 623–633 (AGNTAYTPMNY).

This sequence belongs to the CASP family.

It is found in the golgi apparatus membrane. May be involved in intra-Golgi transport. The protein is Protein CASP (coy1) of Schizosaccharomyces pombe (strain 972 / ATCC 24843) (Fission yeast).